The following is a 186-amino-acid chain: Large ribosomal subunit protein uL10 (186 aa).

The protein belongs to the universal ribosomal protein uL10 family. Part of the ribosomal stalk of the 50S ribosomal subunit. The N-terminus interacts with L11 and the large rRNA to form the base of the stalk. The C-terminus forms an elongated spine to which L12 dimers bind in a sequential fashion forming a multimeric L10(L12)X complex.

Forms part of the ribosomal stalk, playing a central role in the interaction of the ribosome with GTP-bound translation factors. The protein is Large ribosomal subunit protein uL10 of Roseiflexus sp. (strain RS-1).